The sequence spans 171 residues: Secretion monitor (171 aa).

The first 30 residues, 1–30, serve as a signal peptide directing secretion; it reads MIGILNRWRQFGRRYFWPHLLLGMVAASLG.

This sequence belongs to the SecM family.

The protein localises to the cytoplasm. The protein resides in the cytosol. It localises to the periplasm. Functionally, regulates secA expression by translational coupling of the secM secA operon. Translational pausing at a specific Pro residue 5 residues before the end of the protein may allow disruption of a mRNA repressor helix that normally suppresses secA translation initiation. The protein is Secretion monitor of Pectobacterium atrosepticum (strain SCRI 1043 / ATCC BAA-672) (Erwinia carotovora subsp. atroseptica).